The primary structure comprises 393 residues: Polygalacturonase (393 aa).

Residues 1-23 (MANRRSLFSLSLIFVFMINSAIA) form the signal peptide. PbH1 repeat units lie at residues 115–136 (VNGVTISGGILDGQGTALWACK), 178–204 (FQNVQMQGVRVSRSGNSPNTDGIHVQM), 205–226 (SSGVTILNSKIATGDDCVSIGP), 228–248 (TSNLWIEGVACGPGHGISIGS), 258–279 (VQNVTVKTVTFSGTQNGLRIKS), and 288–309 (ARNILFQHATMVNVENPIVIDQ). The active-site Proton donor is aspartate 219. A disulfide bridge connects residues cysteine 221 and cysteine 238. Histidine 242 is a catalytic residue. The N-linked (GlcNAc...) asparagine glycan is linked to asparagine 260. 2 cysteine pairs are disulfide-bonded: cysteine 349-cysteine 355 and cysteine 376-cysteine 392.

The protein belongs to the glycosyl hydrolase 28 family.

Its subcellular location is the secreted. It is found in the cell wall. It carries out the reaction (1,4-alpha-D-galacturonosyl)n+m + H2O = (1,4-alpha-D-galacturonosyl)n + (1,4-alpha-D-galacturonosyl)m.. Its function is as follows. Acts in concert with the pectinesterase, in the ripening process. Is involved in cell wall metabolism, specifically in polyuronide degradation. The sequence is that of Polygalacturonase from Prunus persica (Peach).